A 989-amino-acid polypeptide reads, in one-letter code: Atos homolog protein A (989 aa).

Residues 24 to 32 form a transactivation domain 1 (TAD1) region; the sequence is TLLITEGRT. 4 disordered regions span residues 244–295, 393–477, 525–639, and 656–686; these read GEGG…LPPG, PDAL…KPAT, QNEQ…GLTQ, and EAEK…TPAN. Over residues 254-270 the composition is skewed to low complexity; that stretch reads RSSLRLPRSPLFSRSLH. The span at 397–412 shows a compositional bias: polar residues; the sequence is FTSQEPPGHKTTWNST. Composition is skewed to basic and acidic residues over residues 413-423 and 460-471; these read QDKECLKKSKD and TRLDRVDRESKT. Composition is skewed to polar residues over residues 525-544 and 600-638; these read QNEQ…VSLS and TKSQ…NGLT. The segment covering 656–675 has biased composition (basic and acidic residues); sequence EAEKHVRDGSTCLEKDENQE. Polar residues predominate over residues 676 to 686; it reads PHSSLSSTPAN. Residues 792–849 are required for macropage invasion; sequence LLGNFEECVLNYRLEPLGTVEGFTAEVGASGTFCPSHMTLPVDVSFYSVSDDNAPSPY. The transactivation domain 2 (TAD2) stretch occupies residues 876-884; it reads FNPNKTVVK.

It belongs to the ATOS family.

The protein resides in the nucleus. Functionally, transcription regulator that syncronizes transcriptional and translational programs to promote macrophage invasion of tissues. The polypeptide is Atos homolog protein A (atosa) (Danio rerio (Zebrafish)).